Consider the following 122-residue polypeptide: Large ribosomal subunit protein bL12 (122 aa).

This sequence belongs to the bacterial ribosomal protein bL12 family. As to quaternary structure, homodimer. Part of the ribosomal stalk of the 50S ribosomal subunit. Forms a multimeric L10(L12)X complex, where L10 forms an elongated spine to which 2 to 4 L12 dimers bind in a sequential fashion. Binds GTP-bound translation factors.

Functionally, forms part of the ribosomal stalk which helps the ribosome interact with GTP-bound translation factors. Is thus essential for accurate translation. This Azotobacter vinelandii (strain DJ / ATCC BAA-1303) protein is Large ribosomal subunit protein bL12.